The sequence spans 268 residues: Putative esterase/lipase 2 (268 aa).

H28 is an active-site residue. H96 acts as the Charge relay system in catalysis.

It belongs to the lipase/esterase LIP3/BchO family.

This chain is Putative esterase/lipase 2, found in Mycoplasma pneumoniae (strain ATCC 29342 / M129 / Subtype 1) (Mycoplasmoides pneumoniae).